Reading from the N-terminus, the 215-residue chain is Mite allergen Der p 7 (215 aa).

Positions 1-17 (MMKLLLIAAAAFVAVSA) are cleaved as a signal peptide. The N-linked (GlcNAc...) asparagine glycan is linked to asparagine 151.

It belongs to the mite group 7 allergen family.

The protein resides in the secreted. The polypeptide is Mite allergen Der p 7 (DERP7) (Dermatophagoides pteronyssinus (European house dust mite)).